A 435-amino-acid polypeptide reads, in one-letter code: MTRSSDTIFALSSGRVPSGVAVVRASGPRAREAGLALAGLVPPPRVARYVALREPGTGDLLDRGLILFFPGPRSATGEDTLELHLHGGPAVVTAVLRTLVKLPGFRPAAAGEFTRRAHANGKMDLAEVEGLADLIVAESEAQRRQALAQSSGALSRAVAGWRERLIRALALVEATIDFSDEGDVPDDLTGPARAEAAALCTELTTALADADRGERVRDGFIIAIAGPPNAGKSTLLNRLAGREAAIVSPVPGTTRDVLEVHLHLAGQAVTLVDTAGLRETDDLVEAEGVRRARVRAEGSDLVLWLSDDGTAPPTDMPAPLRVRTKADVTGAEGEEDEIVISAQTGAGINTLIAEMERRLGEMGGGEPALVTRERQRHALSDALYELDAALAIQTHDEDLMAEHLRLAARALDQVVGRVDVEDVLESLFRTFCIGK.

Residues R24, E82, and K122 each contribute to the (6S)-5-formyl-5,6,7,8-tetrahydrofolate site. The 142-residue stretch at 219–360 (GFIIAIAGPP…LIAEMERRLG (142 aa)) folds into the TrmE-type G domain. N229 provides a ligand contact to K(+). Residues 229–234 (NAGKST), 248–254 (SPVPGTT), and 273–276 (DTAG) each bind GTP. Position 233 (S233) interacts with Mg(2+). The K(+) site is built by S248, V250, and T253. Residue T254 coordinates Mg(2+). Residue K435 coordinates (6S)-5-formyl-5,6,7,8-tetrahydrofolate.

This sequence belongs to the TRAFAC class TrmE-Era-EngA-EngB-Septin-like GTPase superfamily. TrmE GTPase family. Homodimer. Heterotetramer of two MnmE and two MnmG subunits. The cofactor is K(+).

Its subcellular location is the cytoplasm. Functionally, exhibits a very high intrinsic GTPase hydrolysis rate. Involved in the addition of a carboxymethylaminomethyl (cmnm) group at the wobble position (U34) of certain tRNAs, forming tRNA-cmnm(5)s(2)U34. The polypeptide is tRNA modification GTPase MnmE (Azorhizobium caulinodans (strain ATCC 43989 / DSM 5975 / JCM 20966 / LMG 6465 / NBRC 14845 / NCIMB 13405 / ORS 571)).